The following is a 295-amino-acid chain: Succinate dehydrogenase [ubiquinone] iron-sulfur subunit, mitochondrial (295 aa).

Positions 67 to 144 (EKPRLQSYTL…DTKIYPLPHM (78 aa)) constitute a 2Fe-2S ferredoxin-type domain. [2Fe-2S] cluster is bound by residues cysteine 106, cysteine 111, cysteine 114, and cysteine 126. Residues 185–215 (ERRRLDGLYECILCACCSTSCPSYWWNQDEY) form the 4Fe-4S ferredoxin-type domain. Residues cysteine 195, cysteine 198, and cysteine 201 each contribute to the [4Fe-4S] cluster site. Cysteine 205 serves as a coordination point for [3Fe-4S] cluster. Tryptophan 210 lines the a ubiquinone pocket. Residues cysteine 252 and cysteine 258 each coordinate [3Fe-4S] cluster. Cysteine 262 lines the [4Fe-4S] cluster pocket.

The protein belongs to the succinate dehydrogenase/fumarate reductase iron-sulfur protein family. In terms of assembly, component of complex II composed of four subunits: a flavoprotein (FP), an iron-sulfur protein (IP), and a cytochrome b composed of a large and a small subunit. Requires [2Fe-2S] cluster as cofactor. It depends on [3Fe-4S] cluster as a cofactor. [4Fe-4S] cluster serves as cofactor.

It is found in the mitochondrion inner membrane. The catalysed reaction is a quinone + succinate = fumarate + a quinol. Its pathway is carbohydrate metabolism; tricarboxylic acid cycle; fumarate from succinate (eukaryal route): step 1/1. In terms of biological role, iron-sulfur protein (IP) subunit of succinate dehydrogenase (SDH) that is involved in complex II of the mitochondrial electron transport chain and is responsible for transferring electrons from succinate to ubiquinone (coenzyme Q). This chain is Succinate dehydrogenase [ubiquinone] iron-sulfur subunit, mitochondrial (SDH2), found in Mycosarcoma maydis (Corn smut fungus).